A 477-amino-acid polypeptide reads, in one-letter code: Peroxisome proliferator-activated receptor gamma (477 aa).

S87 is modified (phosphoserine; by MAPK). The segment at residues 110–184 is a DNA-binding region (nuclear receptor); the sequence is AIECRVCGDK…VGMSHNAIRF (75 aa). NR C4-type zinc fingers lie at residues 113–133 and 150–172; these read CRVCGDKASGFHYGVHACEGC and CDLNCRIHKKSRNKCQFCRFQKC. The tract at residues 231–281 is disordered; sequence TKAKAPGHPDGQSHRQNSRGYTRHELADDGGGSDQGAVREPRAEQGGGDSN. Positions 252-475 constitute an NR LBD domain; sequence TRHELADDGG…HPLLQEIYKD (224 aa). A 9aaTAD motif is present at residues 467–475; sequence PLLQEIYKD.

The protein belongs to the nuclear hormone receptor family. NR1 subfamily. As to quaternary structure, heterodimer with the retinoid X receptor. In terms of tissue distribution, expressed mainly in adipose tissue and kidney.

The protein localises to the nucleus. It localises to the cytoplasm. Its function is as follows. Receptor that binds peroxisome proliferators such as hypolipidemic drugs and fatty acids. Once activated by a ligand, the receptor binds to a promoter element in the gene for acyl-CoA oxidase and activates its transcription. It therefore controls the peroxisomal beta-oxidation pathway of fatty acids. Key regulator of adipocyte differentiation and glucose homeostasis. May play a role in the regulation of circadian rhythm. In Xenopus laevis (African clawed frog), this protein is Peroxisome proliferator-activated receptor gamma (pparg).